The primary structure comprises 209 residues: MSYLFFSFEGPEGAGKTTIVRMLKDYLSEQHVDVVATREPGGIDIAEQIRAVILHPNNERMDARTEALLYAAARRQHLVEKVIPALKDGKVVLCDRFIDSSLAYQGVARGLGIDEILAINAFAIENWMPILTIYFDIDPSLGLARIRENGSREVNRLDLEELSFHEQVRKGYMVLLDRFPNRIKKVDATQPITKVFEDVWALIEPLIRK.

10-17 provides a ligand contact to ATP; it reads GPEGAGKT.

It belongs to the thymidylate kinase family.

The catalysed reaction is dTMP + ATP = dTDP + ADP. Phosphorylation of dTMP to form dTDP in both de novo and salvage pathways of dTTP synthesis. This chain is Thymidylate kinase, found in Anoxybacillus flavithermus (strain DSM 21510 / WK1).